The primary structure comprises 1462 residues: Gag-Pol polyprotein (1462 aa).

A lipid anchor (N-myristoyl glycine; by host) is attached at G2. The interaction with Gp41 stretch occupies residues 7-31 (VLRGKKADELEKIRLRPGGKKKYRL). The Nuclear export signal signature appears at 16 to 22 (LEKIRLR). The Nuclear localization signal signature appears at 26–32 (KKKYRLK). The segment at 191–228 (NCVGDHQAAMQIIREIINEEAADWDVQHPIPGPLPAGQ) is interaction with human PPIA/CYPA and NUP153. Residues 279–364 (YNPTNILDIK…GGPGQKARLM (86 aa)) are dimerization/Multimerization of capsid protein p24. CCHC-type zinc fingers lie at residues 388–405 (IKCW…QCRA) and 409–426 (QGCW…NCPD). Residues 441-507 (APQLPRGPKF…RRDTTQRDDR (67 aa)) are disordered. Over residues 454–468 (NTNSTPNGSSSGPTG) the composition is skewed to low complexity. Composition is skewed to basic and acidic residues over residues 471–490 (HAAR…RSDR) and 497–507 (ARRDTTQRDDR). The segment at 512 to 516 (PQFSL) is dimerization of protease. Positions 531 to 600 (VEVLLDTGAD…TPINIFGRNI (70 aa)) constitute a Peptidase A2 domain. D536 acts as the For protease activity; shared with dimeric partner in catalysis. Dimerization of protease regions lie at residues 560–566 (GIGGFIN) and 599–611 (NILT…LNLP). The 191-residue stretch at 654-844 (EGQLEEAPPT…PPYQWMGYEL (191 aa)) folds into the Reverse transcriptase domain. The Mg(2+) site is built by D720, D795, and D796. The interval 837–845 (YQWMGYELW) is RT 'primer grip'. A Tryptophan repeat motif motif is present at residues 1007-1023 (WEQWWDNYWQVTWIPDW). The RNase H type-1 domain occupies 1043 to 1166 (IPGAETFYTD…IDHLVSQGIR (124 aa)). Positions 1052, 1087, 1107, and 1158 each coordinate Mg(2+). Residues 1172–1213 (ERIEPAQEEHGKYHSNVKELAHKFGLPNLVARQIVNTCAQCQ) form an Integrase-type zinc finger. The Zn(2+) site is built by H1181, H1185, C1209, and C1212. Residues 1222–1373 (QVNAELGTWQ…TPVERLVNMI (152 aa)) form the Integrase catalytic domain. Mg(2+) is bound by residues D1233, D1285, and E1321. Positions 1392–1439 (FRVYFREGRNQLWQGPGELLWKGDGAVIVKVGTDIKVIPRRKAKIIRD) form a DNA-binding region, integrase-type. Residues 1443–1462 (RQEMDSGSHLEGAREDGEMA) form a disordered region.

Homotrimer; further assembles as hexamers of trimers. Interacts with gp41 (via C-terminus). Interacts with host CALM1; this interaction induces a conformational change in the Matrix protein, triggering exposure of the myristate group. Interacts with host AP3D1; this interaction allows the polyprotein trafficking to multivesicular bodies during virus assembly. Part of the pre-integration complex (PIC) which is composed of viral genome, matrix protein, Vpr and integrase. In terms of assembly, homodimer; the homodimer further multimerizes as homohexamers or homopentamers. Interacts with human PPIA/CYPA. Interacts with human NUP153. Interacts with host PDZD8; this interaction stabilizes the capsid. Interacts with monkey TRIM5; this interaction destabilizes the capsid. As to quaternary structure, homodimer, whose active site consists of two apposed aspartic acid residues. Heterodimer of p66 RT and p51 RT (RT p66/p51). Heterodimerization of RT is essential for DNA polymerase activity. The overall folding of the subdomains is similar in p66 RT and p51 RT but the spatial arrangements of the subdomains are dramatically different. In terms of assembly, homotetramer; may further associate as a homohexadecamer. Part of the pre-integration complex (PIC) which is composed of viral genome, matrix protein, Vpr and integrase. Interacts with human SMARCB1/INI1 and human PSIP1/LEDGF isoform 1. Interacts with human KPNA3; this interaction might play a role in nuclear import of the pre-integration complex. Interacts with human NUP153; this interaction might play a role in nuclear import of the pre-integration complex. The cofactor is Mg(2+). Specific enzymatic cleavages by the viral protease yield mature proteins. The protease is released by autocatalytic cleavage. The polyprotein is cleaved during and after budding, this process is termed maturation. Proteolytic cleavage of p66 RT removes the RNase H domain to yield the p51 RT subunit. Nucleocapsid protein p7 might be further cleaved after virus entry.

The protein localises to the host cell membrane. Its subcellular location is the host endosome. It is found in the host multivesicular body. It localises to the virion membrane. The protein resides in the host nucleus. The protein localises to the host cytoplasm. Its subcellular location is the virion. It carries out the reaction Endopeptidase for which the P1 residue is preferably hydrophobic.. The catalysed reaction is Endohydrolysis of RNA in RNA/DNA hybrids. Three different cleavage modes: 1. sequence-specific internal cleavage of RNA. Human immunodeficiency virus type 1 and Moloney murine leukemia virus enzymes prefer to cleave the RNA strand one nucleotide away from the RNA-DNA junction. 2. RNA 5'-end directed cleavage 13-19 nucleotides from the RNA end. 3. DNA 3'-end directed cleavage 15-20 nucleotides away from the primer terminus.. The enzyme catalyses 3'-end directed exonucleolytic cleavage of viral RNA-DNA hybrid.. It catalyses the reaction DNA(n) + a 2'-deoxyribonucleoside 5'-triphosphate = DNA(n+1) + diphosphate. With respect to regulation, protease: The viral protease is inhibited by many synthetic protease inhibitors (PIs), such as amprenavir, atazanavir, indinavir, loprinavir, nelfinavir, ritonavir and saquinavir. Use of protease inhibitors in tritherapy regimens permit more ambitious therapeutic strategies. Reverse transcriptase/ribonuclease H: RT can be inhibited either by nucleoside RT inhibitors (NRTIs) or by non nucleoside RT inhibitors (NNRTIs). NRTIs act as chain terminators, whereas NNRTIs inhibit DNA polymerization by binding a small hydrophobic pocket near the RT active site and inducing an allosteric change in this region. Classical NRTIs are abacavir, adefovir (PMEA), didanosine (ddI), lamivudine (3TC), stavudine (d4T), tenofovir (PMPA), zalcitabine (ddC), and zidovudine (AZT). Classical NNRTIs are atevirdine (BHAP U-87201E), delavirdine, efavirenz (DMP-266), emivirine (I-EBU), and nevirapine (BI-RG-587). The tritherapies used as a basic effective treatment of AIDS associate two NRTIs and one NNRTI. In terms of biological role, mediates, with Gag polyprotein, the essential events in virion assembly, including binding the plasma membrane, making the protein-protein interactions necessary to create spherical particles, recruiting the viral Env proteins, and packaging the genomic RNA via direct interactions with the RNA packaging sequence (Psi). Gag-Pol polyprotein may regulate its own translation, by the binding genomic RNA in the 5'-UTR. At low concentration, the polyprotein would promote translation, whereas at high concentration, the polyprotein would encapsidate genomic RNA and then shut off translation. Functionally, targets the polyprotein to the plasma membrane via a multipartite membrane-binding signal, that includes its myristoylated N-terminus. Matrix protein is part of the pre-integration complex. Implicated in the release from host cell mediated by Vpu. Binds to RNA. Forms the conical core that encapsulates the genomic RNA-nucleocapsid complex in the virion. Most core are conical, with only 7% tubular. The core is constituted by capsid protein hexamer subunits. The core is disassembled soon after virion entry. Host restriction factors such as TRIM5-alpha or TRIMCyp bind retroviral capsids and cause premature capsid disassembly, leading to blocks in reverse transcription. Capsid restriction by TRIM5 is one of the factors which restricts HIV-1 to the human species. Host PIN1 apparently facilitates the virion uncoating. On the other hand, interactions with PDZD8 or CYPA stabilize the capsid. Its function is as follows. Encapsulates and protects viral dimeric unspliced genomic RNA (gRNA). Binds these RNAs through its zinc fingers. Acts as a nucleic acid chaperone which is involved in rearangement of nucleic acid secondary structure during gRNA retrotranscription. Also facilitates template switch leading to recombination. As part of the polyprotein, participates in gRNA dimerization, packaging, tRNA incorporation and virion assembly. In terms of biological role, aspartyl protease that mediates proteolytic cleavages of Gag and Gag-Pol polyproteins during or shortly after the release of the virion from the plasma membrane. Cleavages take place as an ordered, step-wise cascade to yield mature proteins. This process is called maturation. Displays maximal activity during the budding process just prior to particle release from the cell. Also cleaves Nef and Vif, probably concomitantly with viral structural proteins on maturation of virus particles. Hydrolyzes host EIF4GI and PABP1 in order to shut off the capped cellular mRNA translation. The resulting inhibition of cellular protein synthesis serves to ensure maximal viral gene expression and to evade host immune response. Functionally, multifunctional enzyme that converts the viral RNA genome into dsDNA in the cytoplasm, shortly after virus entry into the cell. This enzyme displays a DNA polymerase activity that can copy either DNA or RNA templates, and a ribonuclease H (RNase H) activity that cleaves the RNA strand of RNA-DNA heteroduplexes in a partially processive 3' to 5' endonucleasic mode. Conversion of viral genomic RNA into dsDNA requires many steps. A tRNA(3)-Lys binds to the primer-binding site (PBS) situated at the 5'-end of the viral RNA. RT uses the 3' end of the tRNA primer to perform a short round of RNA-dependent minus-strand DNA synthesis. The reading proceeds through the U5 region and ends after the repeated (R) region which is present at both ends of viral RNA. The portion of the RNA-DNA heteroduplex is digested by the RNase H, resulting in a ssDNA product attached to the tRNA primer. This ssDNA/tRNA hybridizes with the identical R region situated at the 3' end of viral RNA. This template exchange, known as minus-strand DNA strong stop transfer, can be either intra- or intermolecular. RT uses the 3' end of this newly synthesized short ssDNA to perform the RNA-dependent minus-strand DNA synthesis of the whole template. RNase H digests the RNA template except for two polypurine tracts (PPTs) situated at the 5'-end and near the center of the genome. It is not clear if both polymerase and RNase H activities are simultaneous. RNase H probably can proceed both in a polymerase-dependent (RNA cut into small fragments by the same RT performing DNA synthesis) and a polymerase-independent mode (cleavage of remaining RNA fragments by free RTs). Secondly, RT performs DNA-directed plus-strand DNA synthesis using the PPTs that have not been removed by RNase H as primers. PPTs and tRNA primers are then removed by RNase H. The 3' and 5' ssDNA PBS regions hybridize to form a circular dsDNA intermediate. Strand displacement synthesis by RT to the PBS and PPT ends produces a blunt ended, linear dsDNA copy of the viral genome that includes long terminal repeats (LTRs) at both ends. Catalyzes viral DNA integration into the host chromosome, by performing a series of DNA cutting and joining reactions. This enzyme activity takes place after virion entry into a cell and reverse transcription of the RNA genome in dsDNA. The first step in the integration process is 3' processing. This step requires a complex comprising the viral genome, matrix protein, Vpr and integrase. This complex is called the pre-integration complex (PIC). The integrase protein removes 2 nucleotides from each 3' end of the viral DNA, leaving recessed CA OH's at the 3' ends. In the second step, the PIC enters cell nucleus. This process is mediated through integrase and Vpr proteins, and allows the virus to infect a non dividing cell. This ability to enter the nucleus is specific of lentiviruses, other retroviruses cannot and rely on cell division to access cell chromosomes. In the third step, termed strand transfer, the integrase protein joins the previously processed 3' ends to the 5' ends of strands of target cellular DNA at the site of integration. The 5'-ends are produced by integrase-catalyzed staggered cuts, 5 bp apart. A Y-shaped, gapped, recombination intermediate results, with the 5'-ends of the viral DNA strands and the 3' ends of target DNA strands remaining unjoined, flanking a gap of 5 bp. The last step is viral DNA integration into host chromosome. This involves host DNA repair synthesis in which the 5 bp gaps between the unjoined strands are filled in and then ligated. Since this process occurs at both cuts flanking the HIV genome, a 5 bp duplication of host DNA is produced at the ends of HIV-1 integration. Alternatively, Integrase may catalyze the excision of viral DNA just after strand transfer, this is termed disintegration. This is Gag-Pol polyprotein (gag-pol) from Human immunodeficiency virus type 2 subtype A (isolate SBLISY) (HIV-2).